Here is a 609-residue protein sequence, read N- to C-terminus: MCGIVGAIAGRDVVPVLIEGLKRLEYRGYDSSGIAVLESGSIRRVRRTGRVAEMAVAATQEGFTASLGIGHTRWATHGGVTEANAHPHVSHGVVLVHNGIIENHEVQRERLSALGYVFQSQTDTEVIAHLIHYHMQQGDDLLGALQCAVKALTGIYALAVMSEAEPERFVCARMGCPLLIGIGDGEHLVASDISAVIQATRQVIFLEDGDTAEIRRDGISIFNAEQCPVERPLHLSNVSLSSLELGEFRHFMQKEIHEQPRVLADTMEAAIDAAGFPPMLFGAQAESVFRGITGIQILACGTSYYAGLTARYWIEAIAGLPCHVEIASEYRYRKAYVNPQHLVVTISQSGETLDTLEALKYAKALGHRHTLSICNAPDSAIPRISELICYTRAGPEIGVASTKAFTTQLVVLFQLAVALGVLRGAVDAEHEAAYLEQLRQLPCGVQQALNLEPQIAAWAECFASRHHALFLGRGLHYPIALEGALKLKEISYIHAEAYPAGELKHGPLALVDADMPVVVIAPNDSLLEKVKSNMQEVRARGGELFVFADQDSHFSESEGLHVIRTLRHTGVLSPLVHTIPVQLLAYHTALVRGTDVDKPRNLAKSVTVE.

Cysteine 2 serves as the catalytic Nucleophile; for GATase activity. One can recognise a Glutamine amidotransferase type-2 domain in the interval 2–217; it reads CGIVGAIAGR…DGDTAEIRRD (216 aa). 2 consecutive SIS domains span residues 285–425 and 458–599; these read AESV…LRGA and WAEC…VDKP. Lysine 604 acts as the For Fru-6P isomerization activity in catalysis.

In terms of assembly, homodimer.

Its subcellular location is the cytoplasm. It carries out the reaction D-fructose 6-phosphate + L-glutamine = D-glucosamine 6-phosphate + L-glutamate. Catalyzes the first step in hexosamine metabolism, converting fructose-6P into glucosamine-6P using glutamine as a nitrogen source. This chain is Glutamine--fructose-6-phosphate aminotransferase [isomerizing], found in Xylella fastidiosa (strain 9a5c).